A 607-amino-acid polypeptide reads, in one-letter code: CUB and zona pellucida-like domain-containing protein 1 (607 aa).

The N-terminal stretch at Met1 to Ala24 is a signal peptide. Cys17 and Cys58 are oxidised to a cystine. CUB domains lie at Glu25 to Ser146 and Cys154 to Ile265. The Lumenal segment spans residues Glu25–Ser568. Asn29, Asn57, and Asn67 each carry an N-linked (GlcNAc...) asparagine glycan. 3 disulfides stabilise this stretch: Cys85–Cys107, Cys154–Cys180, and Cys207–Cys229. The region spanning Thr276–Arg519 is the ZP domain. Asn394 and Asn419 each carry an N-linked (GlcNAc...) asparagine glycan. An intrachain disulfide couples Cys442 to Cys498. Residues Val569–Val589 traverse the membrane as a helical segment. Residues Arg590–Tyr607 are Cytoplasmic-facing.

In terms of tissue distribution, detected in pancreas and epithelium of ovary. Expressed at higher levels in ovarian tumors than in normal tissue.

The protein resides in the zymogen granule membrane. Localized to zymogen granules, where it functions in trypsinogen activation. May indirectly regulate cell motility, cell-cell and cell/extracellular matrix interactions. This Homo sapiens (Human) protein is CUB and zona pellucida-like domain-containing protein 1.